A 294-amino-acid polypeptide reads, in one-letter code: Diaminopimelate epimerase (294 aa).

Substrate is bound by residues Asn-11 and Asn-78. The Proton donor role is filled by Cys-87. Residues 88-89, Asn-167, Asn-203, and 221-222 each bind substrate; these read GN and ER. Cys-230 serves as the catalytic Proton acceptor. 231–232 lines the substrate pocket; sequence GT.

It belongs to the diaminopimelate epimerase family. In terms of assembly, homodimer.

The protein resides in the cytoplasm. It carries out the reaction (2S,6S)-2,6-diaminopimelate = meso-2,6-diaminopimelate. Its pathway is amino-acid biosynthesis; L-lysine biosynthesis via DAP pathway; DL-2,6-diaminopimelate from LL-2,6-diaminopimelate: step 1/1. Catalyzes the stereoinversion of LL-2,6-diaminopimelate (L,L-DAP) to meso-diaminopimelate (meso-DAP), a precursor of L-lysine and an essential component of the bacterial peptidoglycan. The protein is Diaminopimelate epimerase of Mycolicibacterium paratuberculosis (strain ATCC BAA-968 / K-10) (Mycobacterium paratuberculosis).